Consider the following 67-residue polypeptide: Large ribosomal subunit protein uL29 (67 aa).

This sequence belongs to the universal ribosomal protein uL29 family.

This is Large ribosomal subunit protein uL29 from Moorella thermoacetica (strain ATCC 39073 / JCM 9320).